A 288-amino-acid chain; its full sequence is Coiled-coil domain-containing protein 190 (288 aa).

A coiled-coil region spans residues 16–69 (LERKSARQAEARLSLRLQRLEIICLYHVKSLAREQRQLQKELQRLQQDIIKKRF). The interval 141 to 235 (GERTSCFKEG…SSVDYAGSFK (95 aa)) is disordered. The span at 177-188 (HDQELSTNKTED) shows a compositional bias: basic and acidic residues. The span at 203 to 213 (ANETRSENASQ) shows a compositional bias: polar residues.

In Mus musculus (Mouse), this protein is Coiled-coil domain-containing protein 190 (Ccdc190).